The primary structure comprises 87 residues: Small ribosomal subunit protein bS20 (87 aa).

A compositionally biased stretch (basic residues) spans Met-1–Ile-15. Residues Met-1–Lys-29 form a disordered region. Positions Ala-19–Lys-29 are enriched in polar residues.

It belongs to the bacterial ribosomal protein bS20 family.

Functionally, binds directly to 16S ribosomal RNA. The chain is Small ribosomal subunit protein bS20 from Bdellovibrio bacteriovorus (strain ATCC 15356 / DSM 50701 / NCIMB 9529 / HD100).